The chain runs to 426 residues: Monocarboxylate transporter 13 (426 aa).

Residues 1 to 10 (MAYRAEPPDG) are Cytoplasmic-facing. Helical transmembrane passes span 11 to 31 (GWGW…FGVL), 52 to 72 (VSWI…VGSA), 83 to 103 (VMTG…ATSL), 106 to 126 (LYLS…TPTL), 139 to 159 (LAMG…APLF), 172 to 192 (LLLV…LRPL), 221 to 241 (VALT…VAHL), 244 to 264 (LGWD…SDLV), 283 to 303 (LLML…VAEA), 306 to 326 (GLVA…PVAF), 338 to 358 (IYCG…LGAP), and 374 to 394 (FVVA…LPHF). Topologically, residues 395 to 426 (FCFSAPTSKPQDLVTEALDTKVPLPEEGLGED) are cytoplasmic.

It belongs to the major facilitator superfamily. Monocarboxylate porter (TC 2.A.1.13) family.

It localises to the golgi apparatus membrane. The protein resides in the cell membrane. Its function is as follows. Proton-linked monocarboxylate transporter. May catalyze the transport of monocarboxylates across the plasma membrane. This Bos taurus (Bovine) protein is Monocarboxylate transporter 13 (SLC16A13).